The sequence spans 202 residues: Small ribosomal subunit protein uS4c (202 aa).

In terms of domain architecture, S4 RNA-binding spans 90–153 (MRLDNVIFRL…KSEAIISKNI (64 aa)).

It belongs to the universal ribosomal protein uS4 family. Part of the 30S ribosomal subunit. Contacts protein S5. The interaction surface between S4 and S5 is involved in control of translational fidelity.

The protein localises to the plastid. It localises to the chloroplast. One of the primary rRNA binding proteins, it binds directly to 16S rRNA where it nucleates assembly of the body of the 30S subunit. Functionally, with S5 and S12 plays an important role in translational accuracy. The sequence is that of Small ribosomal subunit protein uS4c (rps4) from Hypopterygium laricinum (Moss).